We begin with the raw amino-acid sequence, 355 residues long: Apyrase apy-1 (355 aa).

Topologically, residues 1–6 (MTQESN) are cytoplasmic. The helical; Signal-anchor for type II membrane protein transmembrane segment at 7 to 29 (SNFFNFLLFGFVTAIAFYSGTQF) threads the bilayer. N-linked (GlcNAc...) asparagine glycosylation is present at asparagine 30. Over 30-355 (NKSSEQEEHI…PYKYEGIAFA (326 aa)) the chain is Lumenal. Ca(2+) contacts are provided by serine 119, glutamate 166, and glutamate 235. The N-linked (GlcNAc...) asparagine glycan is linked to asparagine 291. Glutamate 350 serves as a coordination point for Ca(2+).

Belongs to the apyrase family. Ca(2+) is required as a cofactor.

Its subcellular location is the endomembrane system. The catalysed reaction is a ribonucleoside 5'-diphosphate + H2O = a ribonucleoside 5'-phosphate + phosphate + H(+). In terms of biological role, hydrolyzes UDP and to a lesser extent GDP. By preventing the accumulation of NDP, may promote the reglucosylation of incompletely folded glycoproteins in the endoplasmic reticulum following the unfolded protein response. The polypeptide is Apyrase apy-1 (Caenorhabditis elegans).